Reading from the N-terminus, the 498-residue chain is ATP synthase subunit beta, chloroplastic (498 aa).

172 to 179 (GGAGVGKT) contacts ATP.

This sequence belongs to the ATPase alpha/beta chains family. As to quaternary structure, F-type ATPases have 2 components, CF(1) - the catalytic core - and CF(0) - the membrane proton channel. CF(1) has five subunits: alpha(3), beta(3), gamma(1), delta(1), epsilon(1). CF(0) has four main subunits: a(1), b(1), b'(1) and c(9-12).

The protein resides in the plastid. The protein localises to the chloroplast thylakoid membrane. The enzyme catalyses ATP + H2O + 4 H(+)(in) = ADP + phosphate + 5 H(+)(out). In terms of biological role, produces ATP from ADP in the presence of a proton gradient across the membrane. The catalytic sites are hosted primarily by the beta subunits. The chain is ATP synthase subunit beta, chloroplastic from Nicotiana sp. (Tobacco).